Here is a 133-residue protein sequence, read N- to C-terminus: Holo-[acyl-carrier-protein] synthase (133 aa).

The Mg(2+) site is built by Asp8 and Glu57.

It belongs to the P-Pant transferase superfamily. AcpS family. Mg(2+) serves as cofactor.

It localises to the cytoplasm. The enzyme catalyses apo-[ACP] + CoA = holo-[ACP] + adenosine 3',5'-bisphosphate + H(+). Functionally, transfers the 4'-phosphopantetheine moiety from coenzyme A to a Ser of acyl-carrier-protein. In Chelativorans sp. (strain BNC1), this protein is Holo-[acyl-carrier-protein] synthase.